The chain runs to 90 residues: Small ribosomal subunit protein uS17 (90 aa).

It belongs to the universal ribosomal protein uS17 family. As to quaternary structure, part of the 30S ribosomal subunit.

One of the primary rRNA binding proteins, it binds specifically to the 5'-end of 16S ribosomal RNA. The protein is Small ribosomal subunit protein uS17 of Paraburkholderia phymatum (strain DSM 17167 / CIP 108236 / LMG 21445 / STM815) (Burkholderia phymatum).